Consider the following 231-residue polypeptide: Putative N-acetylmannosamine-6-phosphate 2-epimerase (231 aa).

This sequence belongs to the NanE family.

The catalysed reaction is an N-acyl-D-glucosamine 6-phosphate = an N-acyl-D-mannosamine 6-phosphate. It participates in amino-sugar metabolism; N-acetylneuraminate degradation; D-fructose 6-phosphate from N-acetylneuraminate: step 3/5. Functionally, converts N-acetylmannosamine-6-phosphate (ManNAc-6-P) to N-acetylglucosamine-6-phosphate (GlcNAc-6-P). The chain is Putative N-acetylmannosamine-6-phosphate 2-epimerase from Listeria monocytogenes serotype 4b (strain F2365).